The primary structure comprises 1186 residues: MYND-type zinc finger-containing chromatin reader ZMYND8 (1186 aa).

Over residues 1 to 12 the composition is skewed to basic and acidic residues; the sequence is MDISTRSKDPGS. A disordered region spans residues 1–57; sequence MDISTRSKDPGSAERTAQKRKFPSPPHSSNGHSPQDTSTSPIKKKKKPGLLNSNNKE. The interval 1 to 850 is required for interaction with CCNT1; it reads MDISTRSKDP…QQQQQQQNQQ (850 aa). Residue S12 forms a Glycyl lysine isopeptide (Lys-Gly) (interchain with G-Cter in SUMO2) linkage. A Phosphoserine modification is found at S24. Glycyl lysine isopeptide (Lys-Gly) (interchain with G-Cter in SUMO2) cross-links involve residues K56 and K70. The segment at 75 to 268 is interaction with histone H3K4me0; that stretch reads TDPVDVVPQD…YLAACQKRDN (194 aa). Residues 75 to 406 form an interaction with histone H3K14ac region; the sequence is TDPVDVVPQD…VKLNFDMTAS (332 aa). A PHD-type zinc finger spans residues 88-133; it reads DFYCWVCHREGQVLCCELCPRVYHAKCLRLTSEPEGDWFCPECEKI. The required for interaction with histone H3 and histone H4 stretch occupies residues 88–327; the sequence is DFYCWVCHRE…INNCYLMSKE (240 aa). The Zn(2+) site is built by C91, C94, C103, C106, H111, C114, C127, and C130. Residues 145-252 enclose the Bromo domain; it reads AMTMLTIEQL…KICEHEMNEI (108 aa). Zn(2+) contacts are provided by C255, C258, and C274. The region spanning 277–327 is the PWWP domain; sequence PHPLVWAKLKGFPFWPAKALRDKDGQVDARFFGQHDRAWVPINNCYLMSKE. K390 participates in a covalent cross-link: Glycyl lysine isopeptide (Lys-Gly) (interchain with G-Cter in SUMO2). T404 is subject to Phosphothreonine. Phosphoserine is present on S406. Positions 412–512 are disordered; sequence SKPVLSGGTG…TTKTDKTSTT (101 aa). Residue K413 is modified to N6-acetyllysine; alternate. Residue K413 forms a Glycyl lysine isopeptide (Lys-Gly) (interchain with G-Cter in SUMO2); alternate linkage. A phosphoserine mark is found at S417, S425, and S432. Polar residues predominate over residues 433–442; that stretch reads PMSTNSSVHT. Residue S444 is modified to Phosphoserine. A Glycyl lysine isopeptide (Lys-Gly) (interchain with G-Cter in SUMO2) cross-link involves residue K453. Phosphoserine occurs at positions 460, 462, 465, 486, 490, and 495. Positions 472 to 489 are enriched in polar residues; the sequence is STASPASTKTGQAGSLSG. A Glycyl lysine isopeptide (Lys-Gly) (interchain with G-Cter in SUMO2) cross-link involves residue K505. 2 positions are modified to phosphoserine: S514 and S523. K530 participates in a covalent cross-link: Glycyl lysine isopeptide (Lys-Gly) (interchain with G-Cter in SUMO2). Phosphothreonine is present on T541. The residue at position 547 (S547) is a Phosphoserine. Residue K549 forms a Glycyl lysine isopeptide (Lys-Gly) (interchain with G-Cter in SUMO2) linkage. T563 bears the Phosphothreonine mark. The tract at residues 582 to 884 is disordered; sequence TAVEHSDSED…ITQSPSTSTI (303 aa). Composition is skewed to basic and acidic residues over residues 585-597 and 606-631; these read EHSDSEDSEKSDS and DEQKSKNEPEDTEDKEGCQMDKEPSA. Glycyl lysine isopeptide (Lys-Gly) (interchain with G-Cter in SUMO2) cross-links involve residues K611 and K645. 2 positions are modified to phosphoserine: S652 and S655. Over residues 656–696 the composition is skewed to basic and acidic residues; sequence EKADPGAVKDKASPEPEKDFSEKAKPSPHPIKDKLKGKDET. A Glycyl lysine isopeptide (Lys-Gly) (interchain with G-Cter in SUMO2) cross-link involves residue K657. A phosphoserine mark is found at S668, S682, S707, S709, and S737. Positions 718–738 are enriched in basic and acidic residues; the sequence is GEDHSGREGRKNKKEPKEPSP. T746 carries the post-translational modification Phosphothreonine. Phosphoserine occurs at positions 754 and 756. The segment covering 766-799 has biased composition (low complexity); that stretch reads SSAQTSAAGATATTSTSSTVTVTAPAPAATGSPV. Residues 818 to 832 show a composition bias toward polar residues; that stretch reads VWNSSSKFQTSSQKW. Low complexity predominate over residues 835 to 857; that stretch reads QKMQRQQQQQQQQNQQQQPQSSQ. The span at 873-884 shows a compositional bias: polar residues; it reads KEITQSPSTSTI. Positions 875 to 1047 are required for homodimerization; the sequence is ITQSPSTSTI…YCCWNTSYCD (173 aa). Zn(2+)-binding residues include C1028, C1031, C1039, C1040, C1046, C1050, H1058, and C1062. Residues 1028–1062 form an MYND-type zinc finger; sequence CANCKKEAIFYCCWNTSYCDYPCQQAHWPEHMKSC. Positions 1028-1062 are required for recruitment to DNA damage sites and for interaction with the NuRD complex, CHD4, HDAC1, HDAC2 and KDM1A; it reads CANCKKEAIFYCCWNTSYCDYPCQQAHWPEHMKSC. The segment at 1071 to 1186 is disordered; that stretch reads QEADAEVNTE…KESRLDTFWD (116 aa). Over residues 1085-1103 the composition is skewed to low complexity; it reads SSQGSSSSTQSAPSETASA. Positions 1104-1116 are enriched in basic and acidic residues; that stretch reads SKEKETSAEKSKE. Residue K1115 forms a Glycyl lysine isopeptide (Lys-Gly) (interchain with G-Cter in SUMO2) linkage. S1119 carries the post-translational modification Phosphoserine. Polar residues predominate over residues 1121–1140; it reads LDLSGSRETPSSILLGSNQG. S1141 carries the phosphoserine modification. An interaction with PRKCB1 region spans residues 1147–1186; that stretch reads NKSSWSSSDEKRGSTRSDHNTSTSTKSLLPKESRLDTFWD. Composition is skewed to basic and acidic residues over residues 1154–1165 and 1175–1186; these read SDEKRGSTRSDH and LPKESRLDTFWD.

As to quaternary structure, monomer and homodimer. Interacts with NuRD subcomplexes containing GATAD2A. Interacts with the histone deacetylase NuRD complex subunit CHD4; the interaction is direct, appears to occur with monomeric ZMYND8, and is increased following DNA damage. Interacts (via N-terminus) with the P-TEFb complex subunit CCNT1 (via central region); the interaction is direct and the association appears to occur between homodimeric ZMYND8 and the activated form of the P-TEFb complex. Interacts (via N-terminus) with DBN1 (via ADF-H domain); the interaction leads to sequestering of ZMYND8 in the cytoplasm. Interacts with the P-TEFb complex subunit CDK9; the association appears to occur between homodimeric ZMYND8 and the activated form of the P-TEFb complex. Interacts with EZH2; the interaction is dependent on the presence of chromatin. Interacts (via MYND domain) with the NuRD complex subunit GATAD2A. Interacts with histone H3 (via N-terminus) that is both methylated at 'Lys-4' (H3K4me1) and acetylated at 'Lys-14' (H3K14ac), with histone H3 (via N-terminus) unmodified at 'Lys-4' (H3K4me0) and acetylated at 'Lys-14' (H3K14ac), and with histone H3 (via N-terminus) di-methylated at 'Lys-36' (H3K36me2). Interacts (via Bromo domain) with histone H4 acetylated at 'Lys-16' (H4K16ac). Interacts with HDAC1. Interacts with HDAC2. Interacts with KDM1A. Interacts with KDM5C. Interacts with KDM5D. Interacts in vitro with PRKCB. Interacts with RNA polymerase II subunit POLR2A phosphorylated at 'Ser-5'. Interacts with ZNF592. Interacts with ZNF687. Does not interact with GATAD2B. Expressed in neurons (at protein level). Absent in astrocytes (at protein level). Expressed in all tissues examined with highest expression in brain, lung, pancreas, and placenta. Expressed in cutaneous T-cell lymphomas (CTCL).

The protein resides in the nucleus. Its subcellular location is the chromosome. It is found in the cytoplasm. Its function is as follows. Chromatin reader that recognizes dual histone modifications such as histone H3.1 dimethylated at 'Lys-36' and histone H4 acetylated at 'Lys-16' (H3.1K36me2-H4K16ac) and histone H3 methylated at 'Lys-4' and histone H4 acetylated at 'Lys-14' (H3K4me1-H3K14ac). May act as a transcriptional corepressor for KDM5D by recognizing the dual histone signature H3K4me1-H3K14ac. May also act as a transcriptional corepressor for KDM5C and EZH2. Recognizes acetylated histone H4 and recruits the NuRD chromatin remodeling complex to damaged chromatin for transcriptional repression and double-strand break repair by homologous recombination. Also activates transcription elongation by RNA polymerase II through recruiting the P-TEFb complex to target promoters. Localizes to H3.1K36me2-H4K16ac marks at all-trans-retinoic acid (ATRA)-responsive genes and positively regulates their expression. Promotes neuronal differentiation by associating with regulatory regions within the MAPT gene, to enhance transcription of a protein-coding MAPT isoform and suppress the non-coding MAPT213 isoform. Suppresses breast cancer, and prostate cancer cell invasion and metastasis. In Homo sapiens (Human), this protein is MYND-type zinc finger-containing chromatin reader ZMYND8 (ZMYND8).